Here is a 288-residue protein sequence, read N- to C-terminus: Ribonuclease HIII (288 aa).

Residues tyrosine 76 to asparagine 288 form the RNase H type-2 domain. A divalent metal cation is bound by residues aspartate 82, glutamate 83, and aspartate 185.

Belongs to the RNase HII family. RnhC subfamily. It depends on Mn(2+) as a cofactor. Requires Mg(2+) as cofactor.

It is found in the cytoplasm. It catalyses the reaction Endonucleolytic cleavage to 5'-phosphomonoester.. Functionally, endonuclease that specifically degrades the RNA of RNA-DNA hybrids. This chain is Ribonuclease HIII, found in Phytoplasma mali (strain AT).